The primary structure comprises 1394 residues: DNA-directed RNA polymerase subunit beta'' (1394 aa).

Zn(2+) is bound by residues Cys-224, Cys-295, Cys-302, and Cys-305.

This sequence belongs to the RNA polymerase beta' chain family. RpoC2 subfamily. As to quaternary structure, in plastids the minimal PEP RNA polymerase catalytic core is composed of four subunits: alpha, beta, beta', and beta''. When a (nuclear-encoded) sigma factor is associated with the core the holoenzyme is formed, which can initiate transcription. Zn(2+) is required as a cofactor.

It is found in the plastid. It localises to the chloroplast. The enzyme catalyses RNA(n) + a ribonucleoside 5'-triphosphate = RNA(n+1) + diphosphate. Functionally, DNA-dependent RNA polymerase catalyzes the transcription of DNA into RNA using the four ribonucleoside triphosphates as substrates. This is DNA-directed RNA polymerase subunit beta'' from Cucumis sativus (Cucumber).